The chain runs to 1283 residues: uncharacterized protein (1283 aa).

The LDL-receptor class A domain maps to 10 to 46; it reads ACPPNTFTCADGSCIPSDWKGDGEKDCEDGSDEEAVT. 2 disulfide bridges follow: C11–C23 and C18–C36. Residues 27–47 are disordered; sequence DWKGDGEKDCEDGSDEEAVTG. Positions 34–45 are enriched in acidic residues; it reads KDCEDGSDEEAV. N79 carries an N-linked (GlcNAc...) asparagine glycan. Residues 236–278 form a disordered region; that stretch reads STTLIVDETTESTSASAEDDDDDVLTTNTSEESTATTAHDEEV. Residues 261–272 are compositionally biased toward low complexity; sequence TTNTSEESTATT. A coiled-coil region spans residues 332-389; it reads YQKTLEKEKCAIRNATSKCEALISYNNNLDCAIVTMNDECEVDAQNLVVELQEEVNDL. Disordered regions lie at residues 621 to 651 and 1005 to 1046; these read ARPTPVTMPPRAPTAKPLPIPSAPTPPVASS and SSST…PTDG. The segment covering 626–647 has biased composition (pro residues); it reads VTMPPRAPTAKPLPIPSAPTPP. Positions 1005–1015 are enriched in low complexity; that stretch reads SSSTMVSTSSE. A compositionally biased stretch (acidic residues) spans 1016–1026; that stretch reads SDSESAPEQET. Low complexity predominate over residues 1027 to 1044; it reads EPTVPSTTETTESPSTPT. A helical transmembrane segment spans residues 1263–1283; that stretch reads VQSSVSFHIILAALIPFFALF.

Its subcellular location is the membrane. This is an uncharacterized protein from Caenorhabditis elegans.